The primary structure comprises 671 residues: Probable potassium transport system protein Kup 2 (671 aa).

The next 12 membrane-spanning stretches (helical) occupy residues 12–32 (FAGL…SPLY), 56–76 (ISLI…MIAL), 99–119 (WLVI…TLTP), 139–159 (IPVP…VILF), 172–192 (AFGP…IANL), 218–238 (VGIL…ALYS), 251–271 (SWPY…AWIL), 296–316 (LFAI…LITG), 345–365 (IYIP…VFLF), 374–394 (AYGL…FEYL), 400–420 (PLYL…MFLI), and 429–449 (GGYV…VWFY).

Belongs to the HAK/KUP transporter (TC 2.A.72) family.

The protein localises to the cell membrane. It catalyses the reaction K(+)(in) + H(+)(in) = K(+)(out) + H(+)(out). Functionally, transport of potassium into the cell. Likely operates as a K(+):H(+) symporter. This chain is Probable potassium transport system protein Kup 2, found in Lactobacillus acidophilus (strain ATCC 700396 / NCK56 / N2 / NCFM).